The following is a 100-amino-acid chain: Ubiquitin-related modifier 1 homolog (100 aa).

Position 100 is a 1-thioglycine (G100). G100 is covalently cross-linked (Glycyl lysine isopeptide (Gly-Lys) (interchain with K-? in acceptor proteins)).

It belongs to the URM1 family. As to quaternary structure, interacts with cer. In terms of processing, C-terminal thiocarboxylation occurs in 2 steps, it is first acyl-adenylated (-COAMP) via the hesA/moeB/thiF part of the MOCS3 homolog, then thiocarboxylated (-COSH) via the rhodanese domain of the MOCS3 homolog.

Its subcellular location is the cytoplasm. The protein operates within tRNA modification; 5-methoxycarbonylmethyl-2-thiouridine-tRNA biosynthesis. Acts as a sulfur carrier required for 2-thiolation of mcm(5)S(2)U at tRNA wobble positions of cytosolic tRNA(Lys), tRNA(Glu) and tRNA(Gln). Serves as sulfur donor in tRNA 2-thiolation reaction by being thiocarboxylated (-COSH) at its C-terminus by MOCS3. The sulfur is then transferred to tRNA to form 2-thiolation of mcm(5)S(2)U. Also acts as a ubiquitin-like protein (UBL) that is covalently conjugated via an isopeptide bond to lysine residues of target proteins such as Prx2/Jafrac1, Ciao1, Eip71CD and GILT1. The thiocarboxylated form serves as substrate for conjugation and oxidative stress specifically induces the formation of UBL-protein conjugates. The polypeptide is Ubiquitin-related modifier 1 homolog (Drosophila willistoni (Fruit fly)).